The primary structure comprises 291 residues: rRNA 2'-O-methyltransferase fibrillarin (291 aa).

Composition is skewed to basic and acidic residues over residues 1-12 (MKKTNKRPDGRK) and 20-29 (FRSDKGEGRG). Positions 1-45 (MKKTNKRPDGRKFQKGGKPFRSDKGEGRGRMNNKKKGSVNAGLDR) are disordered. Asymmetric dimethylarginine occurs at positions 28 and 62. S-adenosyl-L-methionine-binding positions include 134–135 (TT), 153–154 (EF), 178–179 (DA), and 198–201 (DVSQ).

Belongs to the methyltransferase superfamily. Fibrillarin family. As to quaternary structure, component of box C/D small nucleolar ribonucleoprotein (snoRNP) particles.

Its subcellular location is the nucleus. The protein localises to the nucleolus. The catalysed reaction is L-glutaminyl-[histone H2A] + S-adenosyl-L-methionine = N(5)-methyl-L-glutaminyl-[histone H2A] + S-adenosyl-L-homocysteine + H(+). S-adenosyl-L-methionine-dependent methyltransferase that has the ability to methylate both RNAs and proteins. Involved in pre-rRNA processing. Utilizes the methyl donor S-adenosyl-L-methionine to catalyze the site-specific 2'-hydroxyl methylation of ribose moieties in pre-ribosomal RNA. Site specificity is provided by a guide RNA that base pairs with the substrate. Methylation occurs at a characteristic distance from the sequence involved in base pairing with the guide RNA. Also acts as a protein methyltransferase by mediating methylation of 'Gln-105' of histone H2A (H2AQ105me), a modification that impairs binding of the FACT complex and is specifically present at 35S ribosomal DNA locus. The chain is rRNA 2'-O-methyltransferase fibrillarin (NOP1) from Encephalitozoon cuniculi (strain GB-M1) (Microsporidian parasite).